Here is an 891-residue protein sequence, read N- to C-terminus: Aconitate hydratase A (891 aa).

3 residues coordinate [4Fe-4S] cluster: C435, C501, and C504.

The protein belongs to the aconitase/IPM isomerase family. Monomer. Requires [4Fe-4S] cluster as cofactor.

It carries out the reaction citrate = D-threo-isocitrate. It catalyses the reaction (2S,3R)-3-hydroxybutane-1,2,3-tricarboxylate = 2-methyl-cis-aconitate + H2O. Its pathway is carbohydrate metabolism; tricarboxylic acid cycle; isocitrate from oxaloacetate: step 2/2. It participates in organic acid metabolism; propanoate degradation. Its function is as follows. Involved in the catabolism of short chain fatty acids (SCFA) via the tricarboxylic acid (TCA)(acetyl degradation route) and the 2-methylcitrate cycle I (propionate degradation route). Catalyzes the reversible isomerization of citrate to isocitrate via cis-aconitate. Also catalyzes the hydration of 2-methyl-cis-aconitate to yield (2R,3S)-2-methylisocitrate. The (2S,3S)-2-methylcitrate (2-MC) is a very poor substrate. The apo form of AcnA functions as a RNA-binding regulatory protein. This Salmonella typhimurium (strain LT2 / SGSC1412 / ATCC 700720) protein is Aconitate hydratase A (acnA).